A 194-amino-acid chain; its full sequence is INO80 complex subunit 4 (194 aa).

2 disordered regions span residues 24–107 and 170–194; these read KEKQ…NSGL and STHA…ATGI. Composition is skewed to polar residues over residues 28 to 38 and 82 to 97; these read NFTASPSSQPK and SKPS…SAPK. A Phosphoserine modification is found at Ser86. Thr90 carries the phosphothreonine modification.

As to quaternary structure, component of the INO80 chromatin remodeling complex.

It localises to the cytoplasm. The protein localises to the nucleus. Its function is as follows. Component of the INO80 complex which remodels chromatin by shifting nucleosomes and is involved in DNA repair. The sequence is that of INO80 complex subunit 4 (ies4) from Schizosaccharomyces pombe (strain 972 / ATCC 24843) (Fission yeast).